Consider the following 126-residue polypeptide: Aspartate 1-decarboxylase (126 aa).

Ser-25 serves as the catalytic Schiff-base intermediate with substrate; via pyruvic acid. Ser-25 carries the post-translational modification Pyruvic acid (Ser). Residue Thr-57 coordinates substrate. The active-site Proton donor is Tyr-58. 73–75 (GAA) is a substrate binding site.

The protein belongs to the PanD family. As to quaternary structure, heterooctamer of four alpha and four beta subunits. It depends on pyruvate as a cofactor. In terms of processing, is synthesized initially as an inactive proenzyme, which is activated by self-cleavage at a specific serine bond to produce a beta-subunit with a hydroxyl group at its C-terminus and an alpha-subunit with a pyruvoyl group at its N-terminus.

Its subcellular location is the cytoplasm. It carries out the reaction L-aspartate + H(+) = beta-alanine + CO2. Its pathway is cofactor biosynthesis; (R)-pantothenate biosynthesis; beta-alanine from L-aspartate: step 1/1. Catalyzes the pyruvoyl-dependent decarboxylation of aspartate to produce beta-alanine. The polypeptide is Aspartate 1-decarboxylase (Nitrosococcus oceani (strain ATCC 19707 / BCRC 17464 / JCM 30415 / NCIMB 11848 / C-107)).